Reading from the N-terminus, the 512-residue chain is Differentially expressed in FDCP 8 homolog (512 aa).

Residue Met-1 is modified to N-acetylmethionine. Residues 77-116 form a disordered region; the sequence is NPFNKQSGPRQHEQGPGEEVPDVTPEEALPELPPGEPEFR. A compositionally biased stretch (acidic residues) spans 95-105; sequence EVPDVTPEEAL. Phorbol-ester/DAG-type zinc fingers lie at residues 199-250 and 429-489; these read EHRF…SKPC and IHTL…STTC. Ser-501 is subject to Phosphoserine.

It belongs to the DEF8 family. As to quaternary structure, interacts (via C-terminus) with PLEKHM1; this interaction is weak but increased in a RAB7A-dependent manner.

Positively regulates lysosome peripheral distribution and ruffled border formation in osteoclasts. Involved in bone resorption. In Homo sapiens (Human), this protein is Differentially expressed in FDCP 8 homolog (DEF8).